Reading from the N-terminus, the 345-residue chain is Transcription factor STKL1 (345 aa).

The disordered stretch occupies residues Met1–Ser145. A compositionally biased stretch (low complexity) spans Ser11–Ile22. Residues Ser23–Glu32 are compositionally biased toward basic and acidic residues. The segment covering Val37–Pro46 has biased composition (polar residues). Ser105 carries the phosphoserine modification. Basic and acidic residues predominate over residues Arg114–Lys137.

This sequence belongs to the GeBP family. As to expression, expressed strongly in leaves and flowers, weakly in roots, and very weakly in stems.

Its subcellular location is the nucleus. Its function is as follows. Transcription repressor that binds DNA in a sequence-specific manner, 5'-GCCT-3', to regulate the expression of PGR. Acts as a modulatory component for the glucose-triggered developmental leaf growth process. This is Transcription factor STKL1 from Arabidopsis thaliana (Mouse-ear cress).